The following is a 223-amino-acid chain: DnaJ homolog subfamily B member 9 (223 aa).

The N-terminal stretch at 1–23 (MATPQSIFIFAICILMITELILA) is a signal peptide. Residues 26–90 (SYYDILGVPK…NRRKEYDTLG (65 aa)) enclose the J domain. A divergent targeting domain region spans residues 91–223 (HSAFTNGKGQ…VTTYTDCSGQ (133 aa)). A Phosphoserine modification is found at Ser-133.

In terms of assembly, interacts with HSPA5/BiP; interaction is direct. Interacts with ERN1/IRE1 (via the luminal region). Interacts with DERL1.

The protein resides in the endoplasmic reticulum lumen. Functionally, co-chaperone for Hsp70 protein HSPA5/BiP that acts as a key repressor of the ERN1/IRE1-mediated unfolded protein response (UPR). J domain-containing co-chaperones stimulate the ATPase activity of Hsp70 proteins and are required for efficient substrate recognition by Hsp70 proteins. In the unstressed endoplasmic reticulum, interacts with the luminal region of ERN1/IRE1 and selectively recruits HSPA5/BiP: HSPA5/BiP disrupts the dimerization of the active ERN1/IRE1 luminal region, thereby inactivating ERN1/IRE1. Also involved in endoplasmic reticulum-associated degradation (ERAD) of misfolded proteins. Required for survival of B-cell progenitors and normal antibody production. The chain is DnaJ homolog subfamily B member 9 from Pongo abelii (Sumatran orangutan).